The following is a 505-amino-acid chain: Glutamate--tRNA ligase (505 aa).

The 'HIGH' region motif lies at 12-22 (PSPTGALHIGG). A 'KMSKS' region motif is present at residues 260–264 (KLSKR). Lys-263 contacts ATP.

Belongs to the class-I aminoacyl-tRNA synthetase family. Glutamate--tRNA ligase type 1 subfamily. In terms of assembly, monomer.

It is found in the cytoplasm. It carries out the reaction tRNA(Glu) + L-glutamate + ATP = L-glutamyl-tRNA(Glu) + AMP + diphosphate. Catalyzes the attachment of glutamate to tRNA(Glu) in a two-step reaction: glutamate is first activated by ATP to form Glu-AMP and then transferred to the acceptor end of tRNA(Glu). This chain is Glutamate--tRNA ligase, found in Phocaeicola vulgatus (strain ATCC 8482 / DSM 1447 / JCM 5826 / CCUG 4940 / NBRC 14291 / NCTC 11154) (Bacteroides vulgatus).